The chain runs to 272 residues: Aquaporin FA-CHIP (272 aa).

The Cytoplasmic segment spans residues 1–17 (MASEFKKKAFWRAVIAE). The chain crosses the membrane as a helical span at residues 18 to 35 (FLAMILFVFISIGAALGF). The Extracellular segment spans residues 36–52 (NFPIEEKANQTVGRSQD). The N-linked (GlcNAc...) asparagine glycan is linked to asparagine 44. Residues 53 to 71 (IVKVSLAFGISIATMAQSV) form a helical membrane-spanning segment. Topologically, residues 72 to 97 (GHVSGAHLNPAVTLGCLLSCQISILK) are cytoplasmic. Positions 80–82 (NPA) match the NPA 1 motif. The helical transmembrane segment at 98-119 (AVMYIIAQCLGAVVATAILSGI) threads the bilayer. Topologically, residues 120–139 (TSGLENNSLGLNGLSPGVSA) are extracellular. N-linked (GlcNAc...) asparagine glycosylation is present at asparagine 125. The chain crosses the membrane as a helical span at residues 140–160 (GQGLGVEILVTFQLVLCVVAV). Topologically, residues 161-168 (TDRRRHDV) are cytoplasmic. Residues 169–188 (SGSVPLAIGLSVALGHLIAI) traverse the membrane as a helical segment. The Extracellular segment spans residues 189 to 214 (DYTGCGMNPARSFGSAVLTKNFTYHW). An NPA 2 motif is present at residues 196–198 (NPA). A glycan (N-linked (GlcNAc...) asparagine) is linked at asparagine 209. The chain crosses the membrane as a helical span at residues 215-236 (IFWVGPMIGGAAAAIIYDFILA). Topologically, residues 237–272 (PRTSDLTDRMKVWTNGQVEEYELDGDDNTRVEMKPK) are cytoplasmic.

Belongs to the MIP/aquaporin (TC 1.A.8) family.

It localises to the membrane. Functionally, forms a water-specific channel. The protein is Aquaporin FA-CHIP (AQPA) of Pelophylax lessonae (Pool frog).